The primary structure comprises 174 residues: Large ribosomal subunit protein uL10 (174 aa).

This sequence belongs to the universal ribosomal protein uL10 family. As to quaternary structure, part of the ribosomal stalk of the 50S ribosomal subunit. The N-terminus interacts with L11 and the large rRNA to form the base of the stalk. The C-terminus forms an elongated spine to which L12 dimers bind in a sequential fashion forming a multimeric L10(L12)X complex.

Its function is as follows. Forms part of the ribosomal stalk, playing a central role in the interaction of the ribosome with GTP-bound translation factors. The chain is Large ribosomal subunit protein uL10 from Vesicomyosocius okutanii subsp. Calyptogena okutanii (strain HA).